Reading from the N-terminus, the 311-residue chain is p-hydroxybenzoic acid efflux pump subunit AaeA (311 aa).

The chain crosses the membrane as a helical span at residues 11–31; the sequence is IAITLILVLLGIIAIFKAWVF.

Belongs to the membrane fusion protein (MFP) (TC 8.A.1) family.

The protein resides in the cell inner membrane. Its function is as follows. Forms an efflux pump with AaeB. This Serratia proteamaculans (strain 568) protein is p-hydroxybenzoic acid efflux pump subunit AaeA.